The primary structure comprises 251 residues: uncharacterized protein (251 aa).

The protein belongs to the FAM243 family.

This is an uncharacterized protein from Mus musculus (Mouse).